Reading from the N-terminus, the 118-residue chain is Large ribosomal subunit protein bL17 (118 aa).

Belongs to the bacterial ribosomal protein bL17 family. In terms of assembly, part of the 50S ribosomal subunit. Contacts protein L32.

This is Large ribosomal subunit protein bL17 from Thermus thermophilus (strain ATCC BAA-163 / DSM 7039 / HB27).